The primary structure comprises 383 residues: Ovalbumin (383 aa).

Gly-2 is subject to N-acetylglycine. The segment at residues 22–48 is a signal peptide (not cleaved); that stretch reads HHANDNMLYSPFAILSTLAMVFLGAKD. Phosphoserine is present on Ser-69. A disulfide bond links Cys-74 and Cys-121. Residues Asn-293 and Asn-312 are each glycosylated (N-linked (GlcNAc...) asparagine). Ser-345 bears the Phosphoserine mark.

The protein belongs to the serpin family. Ov-serpin subfamily. The signal sequence is not cleaved. The functional signal for membrane translocation of ovalbumin becomes accessible when the nascent chain is 50 to 60 residues long. The hydrophobic sequence which lies between residues 27 and 43 folds back on the preceding residues to form an amphipathic hairpin structure which is the signal element recognized by the membrane. In terms of tissue distribution, major protein of egg white.

Its subcellular location is the secreted. Functionally, storage protein of egg white. Lack protease inhibitory activity. The protein is Ovalbumin (SERPINB14) of Coturnix japonica (Japanese quail).